The sequence spans 483 residues: Pre-glycoprotein polyprotein GP complex (483 aa).

G2 carries the N-myristoyl glycine; by host lipid modification. Topologically, residues 2–17 (GQFISFMQEIPIFLQE) are extracellular. A helical transmembrane segment spans residues 18–32 (ALNIALVAVSLICIV). A topological domain (cytoplasmic) is located at residue K33. The chain crosses the membrane as a helical span at residues 34-53 (GLVNLYRCGLFQLMVFLVLA). Extracellular-facing segments span residues 54-58 (GRSCS) and 59-422 (EETF…TLVD). C57 provides a ligand contact to Zn(2+). N-linked (GlcNAc...) asparagine; by host glycans are attached at residues N83 and N95. 6 cysteine pairs are disulfide-bonded: C92–C224, C134–C162, C205–C211, C269–C282, C291–C300, and C354–C375. N-linked (GlcNAc...) asparagine; by host glycosylation is found at N164 and N176. N-linked (GlcNAc...) asparagine; by host glycosylation is found at N355, N363, N380, and N385. A helical membrane pass occupies residues 423–443 (ICFWSTVFFTSTLFLHLIGFP). The Cytoplasmic segment spans residues 444-483 (THEHIRGEGCPLPHRLNSMGGCRCGKYLPLKKPTIWHRRH). Zn(2+)-binding residues include H445, H447, C453, H457, C465, C467, and H483.

This sequence belongs to the arenaviridae GPC protein family. As to quaternary structure, homotetramer; disulfide-linked. Homotetramer. GP2 homotetramers bind through ionic interactions with GP1 homotetramers to form the GP complex together with the stable signal peptide. The GP-C polyprotein interacts with the host protease MBTPS1/SKI-1 resulting in the polyprotein processing. Specific enzymatic cleavages in vivo yield mature proteins. GP-C polyprotein is cleaved in the endoplasmic reticulum by the host protease MBTPS1. Only cleaved glycoprotein is incorporated into virions. In terms of processing, the SSP remains stably associated with the GP complex following cleavage by signal peptidase and plays crucial roles in the trafficking of GP through the secretory pathway. Post-translationally, myristoylation is necessary for GP2-mediated fusion activity.

The protein localises to the virion membrane. The protein resides in the host endoplasmic reticulum membrane. Its subcellular location is the host Golgi apparatus membrane. It is found in the host cell membrane. In terms of biological role, class I viral fusion protein that directs fusion of viral and host endosomal membranes, leading to delivery of the nucleocapsid into the cytoplasm. Membrane fusion is mediated by irreversible conformational changes induced upon acidification in the endosome. Stable signal peptide (SSP): cleaved and functions as a signal peptide. In addition, it is also retained as the third component of the GP complex. The SSP is required for efficient glycoprotein expression, post-translational maturation cleavage of GP1 and GP2, glycoprotein transport to the cell surface plasma membrane, formation of infectious virus particles, and acid pH-dependent glycoprotein-mediated cell fusion. Functionally, interacts with the host receptor. This chain is Pre-glycoprotein polyprotein GP complex, found in Artibeus (neotropical fruit bats).